Reading from the N-terminus, the 411-residue chain is MQCSWKAVLLLALASIAIQYTAIRTFTAKSFHTCPGLTETGLAERLCEEGPTFSYNLSRKTHVLILATTRSGSSFVGQLFNQHMDVFYLFEPLYHVQNTLIPRFTQGKSPADRRVMLGASRDLLRSLYDCDLYFLENYIKPPPVNHTTDRVFRRGASRVLCSRPVCDPPGASDLILEEGDCVRKCGLLNLTLAAEACRERSHVAIKTVRVPEVNDLRALVEDPRLNLKVIQLVRDPRGILASRSETFRDTYRLWRLWYGTGRKPYNLDVTQLTTVCEDFSSSVSTGLMRPSWLKGKYMLVRYEDLARNPMKKTEEIYEFLGIPLDSHVARWIQNNTRGDPTLGKHKYGTVRNSAATAEKWRFRLSYDIVAFAQNACQHVLAQLGYKMATSEEELKNPAISLVEERDFRPFL.

Residue Met-1 is a topological domain, cytoplasmic. A helical; Signal-anchor for type II membrane protein transmembrane segment spans residues Gln-2–Ile-23. Over Arg-24–Leu-411 the chain is Lumenal. Asn-56 carries an N-linked (GlcNAc...) asparagine glycan. Thr-69 to Phe-75 is a 3'-phosphoadenylyl sulfate binding site. N-linked (GlcNAc...) asparagine glycosylation is found at Asn-145 and Asn-189. Arg-234–Ser-242 is a binding site for 3'-phosphoadenylyl sulfate. N-linked (GlcNAc...) asparagine glycosylation occurs at Asn-334. The Cell attachment site motif lies at Arg-337–Asp-339.

This sequence belongs to the sulfotransferase 1 family. Gal/GlcNAc/GalNAc subfamily.

The protein resides in the golgi apparatus membrane. It catalyses the reaction 3'-phosphoadenylyl sulfate + keratan = adenosine 3',5'-bisphosphate + keratan 6'-sulfate.. It functions in the pathway glycan metabolism. Sulfotransferase that utilizes 3'-phospho-5'-adenylyl sulfate (PAPS) as sulfonate donor to catalyze the transfer of sulfate to position 6 of internal galactose (Gal) residues of keratan. Cooperates with B4GALT4 and B3GNT7 glycosyltransferases and CHST6 sulfotransferase to construct and elongate disulfated disaccharide unit [-&gt;3(6-sulfoGalbeta)1-&gt;4(6-sulfoGlcNAcbeta)1-&gt;] within keratan sulfate polymer. Has a preference for sulfating keratan sulfate, but it also transfers sulfate to the unsulfated polymer. Involved in biosynthesis of phosphacan, a major keratan sulfate proteoglycan in the developing brain. Involved in biosynthesis of 6-sulfoGalbeta-containing O-linked glycans in high endothelial venules of lymph nodes. May act in a synergistic manner with CHST4 to generate sialyl 6',6-disulfo Lewis X motif, a recognition determinant for immune cell receptors implicated in leukocyte trafficking. Catalyzes sulfation of N-acetyllactosamine (LacNAc) oligosaccharides with highest efficiency for sialylated LacNAc structures. The sequence is that of Carbohydrate sulfotransferase 1 (Chst1) from Rattus norvegicus (Rat).